The following is a 206-amino-acid chain: Peptidyl-tRNA hydrolase (206 aa).

Tyrosine 19 provides a ligand contact to tRNA. Histidine 24 functions as the Proton acceptor in the catalytic mechanism. Positions 70, 72, and 118 each coordinate tRNA.

Belongs to the PTH family. As to quaternary structure, monomer.

The protein resides in the cytoplasm. The catalysed reaction is an N-acyl-L-alpha-aminoacyl-tRNA + H2O = an N-acyl-L-amino acid + a tRNA + H(+). Hydrolyzes ribosome-free peptidyl-tRNAs (with 1 or more amino acids incorporated), which drop off the ribosome during protein synthesis, or as a result of ribosome stalling. In terms of biological role, catalyzes the release of premature peptidyl moieties from peptidyl-tRNA molecules trapped in stalled 50S ribosomal subunits, and thus maintains levels of free tRNAs and 50S ribosomes. The chain is Peptidyl-tRNA hydrolase from Prochlorococcus marinus (strain MIT 9313).